The following is a 100-amino-acid chain: Small ribosomal subunit protein uS14c (100 aa).

This sequence belongs to the universal ribosomal protein uS14 family. As to quaternary structure, part of the 30S ribosomal subunit.

The protein resides in the plastid. The protein localises to the chloroplast. Its function is as follows. Binds 16S rRNA, required for the assembly of 30S particles. The protein is Small ribosomal subunit protein uS14c of Psilotum nudum (Whisk fern).